The sequence spans 453 residues: MVNKQLKKKAQEIGNVPTHYELEIEDYDQKQKKYGQAYFIWKDPKDPEKHITVELRNDGALLTFSTTVHSETDKKLPDAELKLTALQFAAANHPGTFMNFHFQGKEERGQHIRFVYTKMELGLPIPNSGFLIDMTRSGQIVHFLYYGEGHKAEVPTEFVAKEKVVSHYLNTMSFELMYDVIDGEQEPRLVYEPILPGYSYPADVDEIVPDQHIADERIENTAPLPPLQNKEEVDIFALLGFTSDMQKVSERDFGEQIGSTWRRGAAPERKDLSIGSYFETRNKNTIKMKTDKRTGKLKAALSFMDWRNNLQCSTEECQEIALQFLYALYPRAAEFFRVNPVRIDERGRVRNHFSVWYKGVPLRFGAARIIVNPETGLIDAFMAPDIEPEQLEAINHRPDVSAEEAKEAFLAAFDVKLEWQPDFTAGSDQHCKLVYKPVYPSYIDAHIRKKKRL.

To B.subtilis YcdB.

This is an uncharacterized protein from Bacillus subtilis (strain 168).